A 588-amino-acid polypeptide reads, in one-letter code: MPFNAFDTFKEKILKPGKEGVKNAVGDSLGILQRKLDGTNEEGDAIELSEEGRPVQTSRARAPVCDCSCCGIPKRYIIAVMSGLGFCISFGIRCNLGVAIVEMVNNSTVYVDGKPEIQTAQFNWDPETVGLIHGSFFWGYIVTQIPGGFISNKFAANRVFGAAIFLTSTLNMFIPSAARVHYGCVMCVRILQGLVEGVTYPACHGMWSKWAPPLERSRLATTSFCGSYAGAVVAMPLAGVLVQYIGWASVFYIYGMFGIIWYMFWLLQAYECPAVHPTISNEERTYIETSIGEGANLASLSKFNTPWRRFFTSLPVYAIIVANFCRSWTFYLLLISQPAYFEEVFGFAISKVGLLSAVPHMVMTIVVPIGGQLADYLRSRKILTTTAVRKIMNCGGFGMEATLLLVVGFSHTKGVAISFLVLAVGFSGFAISGFNVNHLDIAPRYASILMGISNGVGTLSGMVCPLIVGAMTKHKTREEWQNVFLIAALVHYSGVIFYGVFASGEKQDWADPENLSEEKCGIIDQDELAEETELNHEAFVSPRKKMSYGATTQNCEVQKTDRRQQRESAFEGEEPLSYQNEEDFSETS.

At 1-76 (MPFNAFDTFK…CSCCGIPKRY (76 aa)) the chain is on the cytoplasmic side. Residues 77-97 (IIAVMSGLGFCISFGIRCNLG) form a helical membrane-spanning segment. At 98-130 (VAIVEMVNNSTVYVDGKPEIQTAQFNWDPETVG) the chain is on the vesicular side. Asparagine 106 carries an N-linked (GlcNAc...) asparagine glycan. The helical transmembrane segment at 131 to 151 (LIHGSFFWGYIVTQIPGGFIS) threads the bilayer. Residues 152 to 153 (NK) are Cytoplasmic-facing. A helical membrane pass occupies residues 154–174 (FAANRVFGAAIFLTSTLNMFI). Residues 175–182 (PSAARVHY) lie on the Vesicular side of the membrane. The helical transmembrane segment at 183-203 (GCVMCVRILQGLVEGVTYPAC) threads the bilayer. The Cytoplasmic portion of the chain corresponds to 204 to 221 (HGMWSKWAPPLERSRLAT). A helical transmembrane segment spans residues 222–242 (TSFCGSYAGAVVAMPLAGVLV). At 243 to 249 (QYIGWAS) the chain is on the vesicular side. A helical transmembrane segment spans residues 250-270 (VFYIYGMFGIIWYMFWLLQAY). Over 271–314 (ECPAVHPTISNEERTYIETSIGEGANLASLSKFNTPWRRFFTSL) the chain is Cytoplasmic. The chain crosses the membrane as a helical span at residues 315-335 (PVYAIIVANFCRSWTFYLLLI). Topologically, residues 336 to 353 (SQPAYFEEVFGFAISKVG) are vesicular. The helical transmembrane segment at 354 to 374 (LLSAVPHMVMTIVVPIGGQLA) threads the bilayer. Over 375–390 (DYLRSRKILTTTAVRK) the chain is Cytoplasmic. The chain crosses the membrane as a helical span at residues 391–411 (IMNCGGFGMEATLLLVVGFSH). Over 412 to 413 (TK) the chain is Vesicular. A helical transmembrane segment spans residues 414–434 (GVAISFLVLAVGFSGFAISGF). At 435–447 (NVNHLDIAPRYAS) the chain is on the cytoplasmic side. Residues 448 to 468 (ILMGISNGVGTLSGMVCPLIV) form a helical membrane-spanning segment. Residues 469–481 (GAMTKHKTREEWQ) lie on the Vesicular side of the membrane. A helical transmembrane segment spans residues 482–502 (NVFLIAALVHYSGVIFYGVFA). Over 503–585 (SGEKQDWADP…LSYQNEEDFS (83 aa)) the chain is Cytoplasmic. Positions 539–588 (FVSPRKKMSYGATTQNCEVQKTDRRQQRESAFEGEEPLSYQNEEDFSETS) are disordered. The span at 558–569 (QKTDRRQQRESA) shows a compositional bias: basic and acidic residues. A compositionally biased stretch (acidic residues) spans 570–588 (FEGEEPLSYQNEEDFSETS).

Belongs to the major facilitator superfamily. Sodium/anion cotransporter family. VGLUT subfamily. Expressed in brain, kidney and liver. Expressed within the amygdala, brainstem, cerberal cortex, dorsal root ganglia, dorsal spinal cord, hippocampus, hypothalamus, retina, striatum and ventral spinal cord. Expressed within neurons of the caudate-putamen, olfactory tubercle, nucleus accumbens, hippocampus, interpeduncular nucleus and dorsal and medial raphe nuclei. Expressed in inner hair cells of the ear. Expressed at synaptic terminals within the lateral superior olive (LSO), a nucleus of the mammalian sound localization system, and in the medial nucleus of the trapezoid body (MNTB), which provides inhibitory input to the LSO.

The protein resides in the cytoplasmic vesicle. Its subcellular location is the secretory vesicle. The protein localises to the synaptic vesicle membrane. It localises to the cell membrane. It is found in the synapse. The protein resides in the synaptosome. It catalyses the reaction L-glutamate(out) = L-glutamate(in). The catalysed reaction is chloride(in) = chloride(out). The enzyme catalyses 3 Na(+)(out) + phosphate(out) = 3 Na(+)(in) + phosphate(in). The L-glutamate uniporter activity exhibits a biphasic dependence on chloride concentration. Chloride channel activity is allosterically activated by lumenal H(+) and Cl(-) leading to synaptic vesicles acidification. The glutamate transport activity is allosterically activated by lumenal H(+) and Cl(-), preventing non-vesicular L-glutamate release. Functionally, multifunctional transporter that transports L-glutamate as well as multiple ions such as chloride, sodium and phosphate. At the synaptic vesicle membrane, mainly functions as an uniporter that mediates the uptake of L-glutamate into synaptic vesicles at presynaptic nerve terminals of excitatory neural cells. The L-glutamate uniporter activity is electrogenic and is driven by the proton electrochemical gradient, mainly by the electrical gradient established by the vacuolar H(+)-ATPase across the synaptic vesicle membrane. In addition, functions as a chloride channel that allows a chloride permeation through the synaptic vesicle membrane that affects the proton electrochemical gradient and promotes synaptic vesicles acidification. At the plasma membrane, following exocytosis, functions as a symporter of Na(+) and phosphate from the extracellular space to the cytoplasm allowing synaptic phosphate homeostasis regulation. The symporter activity is electrogenic. Moreover, operates synergistically with SLC18A3/VACHT under a constant H(+) gradient, thereby allowing striatal vesicular acetylcholine uptake. The polypeptide is Vesicular glutamate transporter 3 (Rattus norvegicus (Rat)).